The sequence spans 271 residues: uncharacterized protein (271 aa).

Belongs to the metallo-dependent hydrolases superfamily. Peptidase M19 family.

This is an uncharacterized protein from Klebsiella pneumoniae.